The following is a 473-amino-acid chain: Photosystem II CP43 reaction center protein (473 aa).

The propeptide occupies 1 to 14; it reads MKILYSLRRFYHVE. Position 15 is an N-acetylthreonine (threonine 15). Threonine 15 bears the Phosphothreonine mark. 5 helical membrane passes run 69 to 93, 134 to 155, 178 to 200, 255 to 275, and 291 to 312; these read LFEV…PHLA, LLGP…KDRN, KALY…RKIT, KPFA…LSYS, and WFNN…ASQA. Glutamate 367 contributes to the [CaMn4O5] cluster binding site. Residues 447 to 471 traverse the membrane as a helical segment; the sequence is RARAAAAGFEKGIDRDLEPVLYMTP.

It belongs to the PsbB/PsbC family. PsbC subfamily. PSII is composed of 1 copy each of membrane proteins PsbA, PsbB, PsbC, PsbD, PsbE, PsbF, PsbH, PsbI, PsbJ, PsbK, PsbL, PsbM, PsbT, PsbX, PsbY, PsbZ, Psb30/Ycf12, at least 3 peripheral proteins of the oxygen-evolving complex and a large number of cofactors. It forms dimeric complexes. It depends on Binds multiple chlorophylls and provides some of the ligands for the Ca-4Mn-5O cluster of the oxygen-evolving complex. It may also provide a ligand for a Cl- that is required for oxygen evolution. PSII binds additional chlorophylls, carotenoids and specific lipids. as a cofactor.

The protein localises to the plastid. It is found in the chloroplast thylakoid membrane. One of the components of the core complex of photosystem II (PSII). It binds chlorophyll and helps catalyze the primary light-induced photochemical processes of PSII. PSII is a light-driven water:plastoquinone oxidoreductase, using light energy to abstract electrons from H(2)O, generating O(2) and a proton gradient subsequently used for ATP formation. The polypeptide is Photosystem II CP43 reaction center protein (Sorghum bicolor (Sorghum)).